Here is a 161-residue protein sequence, read N- to C-terminus: Protein-export protein SecB (161 aa).

The segment at 141–161 (KKQQETAGEQPDQPADTITRH) is disordered.

The protein belongs to the SecB family. In terms of assembly, homotetramer, a dimer of dimers. One homotetramer interacts with 1 SecA dimer.

The protein resides in the cytoplasm. Functionally, one of the proteins required for the normal export of preproteins out of the cell cytoplasm. It is a molecular chaperone that binds to a subset of precursor proteins, maintaining them in a translocation-competent state. It also specifically binds to its receptor SecA. The chain is Protein-export protein SecB from Nitrosomonas europaea (strain ATCC 19718 / CIP 103999 / KCTC 2705 / NBRC 14298).